A 203-amino-acid chain; its full sequence is Glycerol-3-phosphate acyltransferase (203 aa).

The next 5 helical transmembrane spans lie at 12 to 32, 66 to 86, 88 to 108, 118 to 138, and 159 to 179; these read ATLLCLAFGYLLGSIPFGLIL, TLLLDALKGTAAAAIASLWGV, AGIAAGLAAFLGHLFPVWLSF, IGVLLGLAPLMVPAFAAIWLA, and IALYATGYGKVALLFALMTVI.

The protein belongs to the PlsY family. As to quaternary structure, probably interacts with PlsX.

The protein localises to the cell inner membrane. It catalyses the reaction an acyl phosphate + sn-glycerol 3-phosphate = a 1-acyl-sn-glycero-3-phosphate + phosphate. It participates in lipid metabolism; phospholipid metabolism. In terms of biological role, catalyzes the transfer of an acyl group from acyl-phosphate (acyl-PO(4)) to glycerol-3-phosphate (G3P) to form lysophosphatidic acid (LPA). This enzyme utilizes acyl-phosphate as fatty acyl donor, but not acyl-CoA or acyl-ACP. This chain is Glycerol-3-phosphate acyltransferase, found in Sinorhizobium fredii (strain NBRC 101917 / NGR234).